A 53-amino-acid polypeptide reads, in one-letter code: uncharacterized protein (53 aa).

The protein localises to the mitochondrion. This is an uncharacterized protein from Saccharomyces cerevisiae (strain ATCC 204508 / S288c) (Baker's yeast).